A 349-amino-acid polypeptide reads, in one-letter code: Isopentenyl-diphosphate delta-isomerase (349 aa).

Arginine 8 to lysine 9 is a binding site for substrate. FMN-binding positions include serine 66, serine 67 to threonine 69, serine 97, and asparagine 125. Serine 97–arginine 99 is a substrate binding site. Glutamine 160 is a binding site for substrate. Glutamate 161 provides a ligand contact to Mg(2+). FMN contacts are provided by residues lysine 192, threonine 222, glycine 272–lysine 274, and alanine 293–arginine 294.

It belongs to the IPP isomerase type 2 family. Homooctamer. Dimer of tetramers. FMN serves as cofactor. Requires NADPH as cofactor. It depends on Mg(2+) as a cofactor.

It is found in the cytoplasm. The enzyme catalyses isopentenyl diphosphate = dimethylallyl diphosphate. Functionally, involved in the biosynthesis of isoprenoids. Catalyzes the 1,3-allylic rearrangement of the homoallylic substrate isopentenyl (IPP) to its allylic isomer, dimethylallyl diphosphate (DMAPP). The polypeptide is Isopentenyl-diphosphate delta-isomerase (Oceanobacillus iheyensis (strain DSM 14371 / CIP 107618 / JCM 11309 / KCTC 3954 / HTE831)).